The following is a 200-amino-acid chain: MELQVVGANALTVSETTFGREFNEALIHQVVVAYAAGARQGSRAQKTRAEVSGSGKKPWRQKGTGRARSGDIKSPIWRSGGTTFAAKPQDHSQKVNKKMYRGAIKSILSELVRQERLVVVEKFEVEAPKTKFLVQKLKDLALNDALIITASLDENLFLAARNLYKVDVRDVQGIDPVSLIAFDKVVITTDAVKQIEEMLA.

Residues 43-72 (RAQKTRAEVSGSGKKPWRQKGTGRARSGDI) form a disordered region.

This sequence belongs to the universal ribosomal protein uL4 family. Part of the 50S ribosomal subunit.

One of the primary rRNA binding proteins, this protein initially binds near the 5'-end of the 23S rRNA. It is important during the early stages of 50S assembly. It makes multiple contacts with different domains of the 23S rRNA in the assembled 50S subunit and ribosome. In terms of biological role, forms part of the polypeptide exit tunnel. The chain is Large ribosomal subunit protein uL4 from Haemophilus ducreyi (strain 35000HP / ATCC 700724).